We begin with the raw amino-acid sequence, 318 residues long: MIDKHGRNIDYLRISVTDRCNLRCIYCMPKMKGYIQENNKISCSDIFKLLRAAVSVGINKVRYTGGEPLLNEEISKIIYETSKLPQINDIAITTNGILLPQMAKDLKKAGLKRVNISLDTLKSDTFTKITNFNQITKVIDGIDTCLKLNLKPVKINTVLIKGINDLEVNDFVNLSREMPVEIRFIELMPIGEGAKIYEKGRVNIKELLMSRSDLIPIESLQNSTANMYKIKGGKGRIGYITPISCKFCSTCNKIRLTSMGTIKPCLHSNQEIDLKPYLNNEDVLVEKLKTIIFNKTFQHHINEENISRSKKMMYQIGG.

Positions K4–E218 constitute a Radical SAM core domain. R13 contacts GTP. Residues C20 and C24 each contribute to the [4Fe-4S] cluster site. Y26 provides a ligand contact to S-adenosyl-L-methionine. Residue C27 participates in [4Fe-4S] cluster binding. GTP is bound at residue R62. S-adenosyl-L-methionine is bound at residue G66. Residue T93 coordinates GTP. An S-adenosyl-L-methionine-binding site is contributed by S117. K154 provides a ligand contact to GTP. M188 is a binding site for S-adenosyl-L-methionine. The [4Fe-4S] cluster site is built by C248 and C251. GTP is bound at residue K253–R255. Residue C265 coordinates [4Fe-4S] cluster.

Belongs to the radical SAM superfamily. MoaA family. Monomer and homodimer. [4Fe-4S] cluster is required as a cofactor.

The enzyme catalyses GTP + AH2 + S-adenosyl-L-methionine = (8S)-3',8-cyclo-7,8-dihydroguanosine 5'-triphosphate + 5'-deoxyadenosine + L-methionine + A + H(+). The protein operates within cofactor biosynthesis; molybdopterin biosynthesis. Catalyzes the cyclization of GTP to (8S)-3',8-cyclo-7,8-dihydroguanosine 5'-triphosphate. In Clostridium acetobutylicum (strain ATCC 824 / DSM 792 / JCM 1419 / IAM 19013 / LMG 5710 / NBRC 13948 / NRRL B-527 / VKM B-1787 / 2291 / W), this protein is GTP 3',8-cyclase.